The following is a 518-amino-acid chain: Chromosomal replication initiator protein DnaA (518 aa).

The segment at 1 to 72 is domain I, interacts with DnaA modulators; sequence MTLAEFWPLC…VREELAAGRS (72 aa). The segment at 72-180 is domain II; sequence SAFVFKPGEG…DAEEARYEQT (109 aa). The tract at residues 181–397 is domain III, AAA+ region; the sequence is NLSPDYTFDT…GAFNRVGASS (217 aa). ATP is bound by residues Gly225, Gly227, Lys228, and Thr229. Residues 398–518 are domain IV, binds dsDNA; the sequence is RFMNRPVIDI…YEKLLILIQN (121 aa).

It belongs to the DnaA family. Oligomerizes as a right-handed, spiral filament on DNA at oriC.

It localises to the cytoplasm. Functionally, plays an essential role in the initiation and regulation of chromosomal replication. ATP-DnaA binds to the origin of replication (oriC) to initiate formation of the DNA replication initiation complex once per cell cycle. Binds the DnaA box (a 9 base pair repeat at the origin) and separates the double-stranded (ds)DNA. Forms a right-handed helical filament on oriC DNA; dsDNA binds to the exterior of the filament while single-stranded (ss)DNA is stabiized in the filament's interior. The ATP-DnaA-oriC complex binds and stabilizes one strand of the AT-rich DNA unwinding element (DUE), permitting loading of DNA polymerase. After initiation quickly degrades to an ADP-DnaA complex that is not apt for DNA replication. Binds acidic phospholipids. In Neisseria meningitidis serogroup C / serotype 2a (strain ATCC 700532 / DSM 15464 / FAM18), this protein is Chromosomal replication initiator protein DnaA.